A 360-amino-acid chain; its full sequence is Probable protein phosphatase 2C 54 (360 aa).

Residues 1-39 form a disordered region; that stretch reads MCVEESEGAERLDFGEPAAAAADAGKSKSKSPDELPSPR. The 261-residue stretch at 65–325 folds into the PPM-type phosphatase domain; sequence RSGDWSDIGG…DNLTAVLVSF (261 aa). Mn(2+)-binding residues include aspartate 109, glycine 110, aspartate 273, and aspartate 316.

This sequence belongs to the PP2C family. The cofactor is Mg(2+). Requires Mn(2+) as cofactor.

It catalyses the reaction O-phospho-L-seryl-[protein] + H2O = L-seryl-[protein] + phosphate. It carries out the reaction O-phospho-L-threonyl-[protein] + H2O = L-threonyl-[protein] + phosphate. This chain is Probable protein phosphatase 2C 54, found in Oryza sativa subsp. japonica (Rice).